The following is a 138-amino-acid chain: Small ribosomal subunit protein uS11c (138 aa).

A disordered region spans residues 1–24 (MAKAIPRSGSRRSGRIGSRKSTRR). Positions 9–24 (GSRRSGRIGSRKSTRR) are enriched in basic residues.

The protein belongs to the universal ribosomal protein uS11 family. In terms of assembly, part of the 30S ribosomal subunit.

The protein localises to the plastid. It localises to the chloroplast. The polypeptide is Small ribosomal subunit protein uS11c (Panax ginseng (Korean ginseng)).